Reading from the N-terminus, the 281-residue chain is Protease HtpX homolog (281 aa).

Transmembrane regions (helical) follow at residues 6–26 (VWLL…AIGG) and 28–48 (SGAL…YYYS). H130 contacts Zn(2+). E131 is an active-site residue. H134 contributes to the Zn(2+) binding site. Transmembrane regions (helical) follow at residues 140 to 160 (VLIG…SNIV) and 181 to 201 (IASL…QLAI). E206 provides a ligand contact to Zn(2+).

Belongs to the peptidase M48B family. Zn(2+) is required as a cofactor.

The protein resides in the cell membrane. The chain is Protease HtpX homolog from Pelotomaculum thermopropionicum (strain DSM 13744 / JCM 10971 / SI).